A 147-amino-acid polypeptide reads, in one-letter code: Putative protein adenylyltransferase MJ1305 (147 aa).

A GSX(10)DXD motif motif is present at residues 32–46; it reads GSYARGTAVEYSDVD. Mg(2+) contacts are provided by aspartate 44 and aspartate 46.

This sequence belongs to the MntA antitoxin family. Mg(2+) serves as cofactor.

The catalysed reaction is L-tyrosyl-[protein] + ATP = O-(5'-adenylyl)-L-tyrosyl-[protein] + diphosphate. The enzyme catalyses O-(5'-adenylyl)-L-tyrosyl-[protein] + ATP = O-[5'-(adenylyl-(5'-&gt;3')-adenylyl)]-L-tyrosyl-[protein] + diphosphate. In terms of biological role, putative antitoxin component of a putative type VII toxin-antitoxin (TA) system. Its cognate toxin might be MJ1304, which it might AMPylate. This chain is Putative protein adenylyltransferase MJ1305, found in Methanocaldococcus jannaschii (strain ATCC 43067 / DSM 2661 / JAL-1 / JCM 10045 / NBRC 100440) (Methanococcus jannaschii).